We begin with the raw amino-acid sequence, 591 residues long: NADP-dependent malic enzyme (591 aa).

Over residues 1–10 the composition is skewed to basic and acidic residues; sequence MESTLKEMRD. A disordered region spans residues 1–26; sequence MESTLKEMRDGASVLDMDPKSTVGGG. The Proton donor role is filled by Tyr139. Arg192 contributes to the NAD(+) binding site. Lys210 (proton acceptor) is an active-site residue. A divalent metal cation is bound by residues Glu282, Asp283, and Asp306. Asp306 is an NAD(+) binding site. 335–351 contributes to the NADP(+) binding site; it reads LFLGAGEAGTGIAELIA. An NAD(+)-binding site is contributed by Asn447.

The protein belongs to the malic enzymes family. Homotetramer. It depends on Mg(2+) as a cofactor. Requires Mn(2+) as cofactor. As to expression, mRNA found twofold higher in leaves and stems than in roots.

The protein resides in the cytoplasm. It catalyses the reaction (S)-malate + NADP(+) = pyruvate + CO2 + NADPH. The enzyme catalyses oxaloacetate + H(+) = pyruvate + CO2. This chain is NADP-dependent malic enzyme, found in Populus trichocarpa (Western balsam poplar).